Consider the following 292-residue polypeptide: Phosphatidylglycerol--prolipoprotein diacylglyceryl transferase (292 aa).

Transmembrane regions (helical) follow at residues 7-27, 45-65, 83-103, and 116-136; these read IILS…FLRE, FQLR…YVLA, LFWG…IFNW, and IWHG…MIFI. Position 165 (Arg-165) interacts with a 1,2-diacyl-sn-glycero-3-phospho-(1'-sn-glycerol). Helical transmembrane passes span 204 to 224 and 264 to 284; these read PTFL…YFFV and AAQV…AYII.

This sequence belongs to the Lgt family.

The protein resides in the cell inner membrane. The catalysed reaction is L-cysteinyl-[prolipoprotein] + a 1,2-diacyl-sn-glycero-3-phospho-(1'-sn-glycerol) = an S-1,2-diacyl-sn-glyceryl-L-cysteinyl-[prolipoprotein] + sn-glycerol 1-phosphate + H(+). The protein operates within protein modification; lipoprotein biosynthesis (diacylglyceryl transfer). In terms of biological role, catalyzes the transfer of the diacylglyceryl group from phosphatidylglycerol to the sulfhydryl group of the N-terminal cysteine of a prolipoprotein, the first step in the formation of mature lipoproteins. The chain is Phosphatidylglycerol--prolipoprotein diacylglyceryl transferase from Fervidobacterium nodosum (strain ATCC 35602 / DSM 5306 / Rt17-B1).